Here is a 550-residue protein sequence, read N- to C-terminus: MTPADLATLIKQTAVEVLTSRDLDASMLPEQIVVERPRNPEHGDYATNVALQVAKKVGVTPRDLGTWLAEALAADDSIDSAEIAGPGFINIRLAAAAQGEIVAKILEQGEKFGTSDHLSHLDVNLEFVSANPTGPIHLGGTRWAAVGDSLGRVLEAAGAKVTREYYFNDHGRQIDRFALSLLAAAKGEPTPEDGYGGEYIREIAEAIVAKHPDALDRTPEETQELFRSEGVEMMFSHIRESLHEFGTDFDVYFHENSLFESGAVDRAVQKLKDNGNLYESDGAWWLRSTDFGDDKDRVVIKSDGDAAYIAGDIAYVQDKFERGHNLNIYMLGADHHGYIARLKAAAAALGYAPEGVEVLIGQMVNLLRDGTAVRMSKRAGTVVTLDDLVEAIGIDAARYSLIRSSVDSSLDIDLGLWESQSSDNPVYYVQYGHARLCSIARKAADLGVTYEDADLSLLTHDREGDLIRTLGEFPAVIRAAADLREPHRIARYAEELAGTFHRFYDSCQILPKADEEKAPIHAARLALAAATRQTLANALALVGVSAPEKM.

A 'HIGH' region motif is present at residues alanine 130–glycine 140.

It belongs to the class-I aminoacyl-tRNA synthetase family. Monomer.

It is found in the cytoplasm. It carries out the reaction tRNA(Arg) + L-arginine + ATP = L-arginyl-tRNA(Arg) + AMP + diphosphate. This is Arginine--tRNA ligase from Corynebacterium efficiens (strain DSM 44549 / YS-314 / AJ 12310 / JCM 11189 / NBRC 100395).